A 176-amino-acid chain; its full sequence is Large ribosomal subunit protein bL17 (176 aa).

Positions 124 to 176 (AAPKAARQDRSKRVKGSRKTEASAAKAAPAAQAAPELPAESDAPAAEAAPTEE) are disordered. Low complexity predominate over residues 145 to 176 (ASAAKAAPAAQAAPELPAESDAPAAEAAPTEE).

It belongs to the bacterial ribosomal protein bL17 family. In terms of assembly, part of the 50S ribosomal subunit. Contacts protein L32.

The protein is Large ribosomal subunit protein bL17 of Chlorobium phaeovibrioides (strain DSM 265 / 1930) (Prosthecochloris vibrioformis (strain DSM 265)).